We begin with the raw amino-acid sequence, 649 residues long: tRNA-guanine(15) transglycosylase (649 aa).

The active-site Nucleophile is the D88. Positions 123 and 194 each coordinate substrate. Residues C280, C282, and C285 each coordinate Zn(2+). One can recognise a PUA domain in the interval K572 to K647.

The protein belongs to the archaeosine tRNA-ribosyltransferase family. Requires Zn(2+) as cofactor.

It carries out the reaction guanosine(15) in tRNA + 7-cyano-7-deazaguanine = 7-cyano-7-carbaguanosine(15) in tRNA + guanine. The protein operates within tRNA modification; archaeosine-tRNA biosynthesis. Exchanges the guanine residue with 7-cyano-7-deazaguanine (preQ0) at position 15 in the dihydrouridine loop (D-loop) of archaeal tRNAs. This chain is tRNA-guanine(15) transglycosylase, found in Methanococcus vannielii (strain ATCC 35089 / DSM 1224 / JCM 13029 / OCM 148 / SB).